The following is a 59-amino-acid chain: MAVPARRTSKMRKRNRRGHIKLATPNLAPCPNCGELRVSHRVCPSCGYYNGKQVVKVNN.

It belongs to the bacterial ribosomal protein bL32 family.

In Lactiplantibacillus plantarum (strain ATCC BAA-793 / NCIMB 8826 / WCFS1) (Lactobacillus plantarum), this protein is Large ribosomal subunit protein bL32.